Consider the following 122-residue polypeptide: Large ribosomal subunit protein uL14 (122 aa).

It belongs to the universal ribosomal protein uL14 family. Part of the 50S ribosomal subunit. Forms a cluster with proteins L3 and L19. In the 70S ribosome, L14 and L19 interact and together make contacts with the 16S rRNA in bridges B5 and B8.

Binds to 23S rRNA. Forms part of two intersubunit bridges in the 70S ribosome. The chain is Large ribosomal subunit protein uL14 from Corynebacterium kroppenstedtii (strain DSM 44385 / JCM 11950 / CIP 105744 / CCUG 35717).